Here is a 548-residue protein sequence, read N- to C-terminus: Folylpolyglutamate synthase (548 aa).

ATP is bound at residue G130 to S133. Residues S157, E234, and H262 each coordinate Mg(2+). ATP-binding residues include R382 and D396.

Belongs to the folylpolyglutamate synthase family. A monovalent cation serves as cofactor.

Its subcellular location is the mitochondrion inner membrane. It is found in the mitochondrion matrix. The protein resides in the cytoplasm. It carries out the reaction (6S)-5,6,7,8-tetrahydrofolyl-(gamma-L-Glu)(n) + L-glutamate + ATP = (6S)-5,6,7,8-tetrahydrofolyl-(gamma-L-Glu)(n+1) + ADP + phosphate + H(+). It participates in cofactor biosynthesis; tetrahydrofolylpolyglutamate biosynthesis. Its function is as follows. Catalyzes conversion of folates to polyglutamate derivatives allowing concentration of folate compounds in the cell and the intracellular retention of these cofactors, which are important substrates for most of the folate-dependent enzymes that are involved in one-carbon transfer reactions involved in purine, pyrimidine and amino acid synthesis. Required for methionine synthesis and maintenance of intact mitochondrial DNA. Involved in telomere maintenance. This chain is Folylpolyglutamate synthase, found in Saccharomyces cerevisiae (strain RM11-1a) (Baker's yeast).